The sequence spans 312 residues: MDGDNQSENSQFLLLGISESPEQQQILFWMFLSMYLVTVLGNVLIILAISSDSHLHTPMYFFLANLSFTDLFFVTNTIPKMLVNFQSQNKAISYAGCLTQLYFLVSLVTLDNLILAVMAYDRYVAICCPLHYVTAMSPGLCVLLLSLCWGLSVLYGLLLTLLLTRVTFCGPREIHYLFCDMYILLRLACSNTHIIHTVLVATGCFIFLTPLGFMTTSYVCIVRTILQIPSASKKYKAFSTCASHLGVVSLFYGTLAMVYLQPLHTYSMKDSVATVMYAVVTPMMNPFIYSLRNKDMHGALGRVLRRLFQRPK.

Residues 1–25 (MDGDNQSENSQFLLLGISESPEQQQ) lie on the Extracellular side of the membrane. N5 carries an N-linked (GlcNAc...) asparagine glycan. The chain crosses the membrane as a helical span at residues 26 to 49 (ILFWMFLSMYLVTVLGNVLIILAI). Residues 50–57 (SSDSHLHT) lie on the Cytoplasmic side of the membrane. A helical membrane pass occupies residues 58-79 (PMYFFLANLSFTDLFFVTNTIP). The Extracellular segment spans residues 80–100 (KMLVNFQSQNKAISYAGCLTQ). C97 and C189 form a disulfide bridge. The chain crosses the membrane as a helical span at residues 101–120 (LYFLVSLVTLDNLILAVMAY). Topologically, residues 121-140 (DRYVAICCPLHYVTAMSPGL) are cytoplasmic. Residues 141-158 (CVLLLSLCWGLSVLYGLL) form a helical membrane-spanning segment. The Extracellular segment spans residues 159 to 196 (LTLLLTRVTFCGPREIHYLFCDMYILLRLACSNTHIIH). A helical membrane pass occupies residues 197-220 (TVLVATGCFIFLTPLGFMTTSYVC). Topologically, residues 221–237 (IVRTILQIPSASKKYKA) are cytoplasmic. Residues 238–260 (FSTCASHLGVVSLFYGTLAMVYL) traverse the membrane as a helical segment. The Extracellular segment spans residues 261–271 (QPLHTYSMKDS). The helical transmembrane segment at 272-291 (VATVMYAVVTPMMNPFIYSL) threads the bilayer. Topologically, residues 292–312 (RNKDMHGALGRVLRRLFQRPK) are cytoplasmic.

Belongs to the G-protein coupled receptor 1 family.

The protein localises to the cell membrane. Functionally, odorant receptor. This chain is Olfactory receptor 1D5 (OR1D5), found in Pan paniscus (Pygmy chimpanzee).